Consider the following 334-residue polypeptide: Holliday junction branch migration complex subunit RuvB (334 aa).

Residues 1-182 are large ATPase domain (RuvB-L); that stretch reads MDDRMVDQSM…FGVHLRLEYY (182 aa). Residues Leu-21, Arg-22, Gly-63, Lys-66, Thr-67, Thr-68, 129–131, Arg-172, Tyr-182, and Arg-219 each bind ATP; that span reads EDF. Thr-67 contributes to the Mg(2+) binding site. Residues 183–253 form a small ATPAse domain (RuvB-S) region; the sequence is QELELKEIIV…TTRASLQLLQ (71 aa). The interval 256-334 is head domain (RuvB-H); the sequence is DEGLDYIDHK…HFSKKNGKKE (79 aa). DNA is bound by residues Arg-292, Arg-311, and Arg-316.

Belongs to the RuvB family. As to quaternary structure, homohexamer. Forms an RuvA(8)-RuvB(12)-Holliday junction (HJ) complex. HJ DNA is sandwiched between 2 RuvA tetramers; dsDNA enters through RuvA and exits via RuvB. An RuvB hexamer assembles on each DNA strand where it exits the tetramer. Each RuvB hexamer is contacted by two RuvA subunits (via domain III) on 2 adjacent RuvB subunits; this complex drives branch migration. In the full resolvosome a probable DNA-RuvA(4)-RuvB(12)-RuvC(2) complex forms which resolves the HJ.

It is found in the cytoplasm. It carries out the reaction ATP + H2O = ADP + phosphate + H(+). In terms of biological role, the RuvA-RuvB-RuvC complex processes Holliday junction (HJ) DNA during genetic recombination and DNA repair, while the RuvA-RuvB complex plays an important role in the rescue of blocked DNA replication forks via replication fork reversal (RFR). RuvA specifically binds to HJ cruciform DNA, conferring on it an open structure. The RuvB hexamer acts as an ATP-dependent pump, pulling dsDNA into and through the RuvAB complex. RuvB forms 2 homohexamers on either side of HJ DNA bound by 1 or 2 RuvA tetramers; 4 subunits per hexamer contact DNA at a time. Coordinated motions by a converter formed by DNA-disengaged RuvB subunits stimulates ATP hydrolysis and nucleotide exchange. Immobilization of the converter enables RuvB to convert the ATP-contained energy into a lever motion, pulling 2 nucleotides of DNA out of the RuvA tetramer per ATP hydrolyzed, thus driving DNA branch migration. The RuvB motors rotate together with the DNA substrate, which together with the progressing nucleotide cycle form the mechanistic basis for DNA recombination by continuous HJ branch migration. Branch migration allows RuvC to scan DNA until it finds its consensus sequence, where it cleaves and resolves cruciform DNA. This Staphylococcus saprophyticus subsp. saprophyticus (strain ATCC 15305 / DSM 20229 / NCIMB 8711 / NCTC 7292 / S-41) protein is Holliday junction branch migration complex subunit RuvB.